The sequence spans 49 residues: Large ribosomal subunit protein uL16 (49 aa).

Belongs to the universal ribosomal protein uL16 family. Part of the 50S ribosomal subunit.

Functionally, binds 23S rRNA and is also seen to make contacts with the A and possibly P site tRNAs. The protein is Large ribosomal subunit protein uL16 (rplP) of Aquifex pyrophilus.